A 217-amino-acid chain; its full sequence is Holliday junction branch migration complex subunit RuvA (217 aa).

A domain I region spans residues 1 to 64 (MIGKLTGILD…EDAIRLFGFE (64 aa)). Residues 65 to 145 (TKVEQDWFCL…NAPHQSMPHF (81 aa)) are domain II. Residues 146-160 (VSYSSETSSQAGTQH) are flexible linker. Residues 161–217 (TGHQHSMDALAALTKLGFERDQATHALQEAIKAFEGETPSSALLIRHSLKLLSSHLK) form a domain III region.

It belongs to the RuvA family. In terms of assembly, homotetramer. Forms an RuvA(8)-RuvB(12)-Holliday junction (HJ) complex. HJ DNA is sandwiched between 2 RuvA tetramers; dsDNA enters through RuvA and exits via RuvB. An RuvB hexamer assembles on each DNA strand where it exits the tetramer. Each RuvB hexamer is contacted by two RuvA subunits (via domain III) on 2 adjacent RuvB subunits; this complex drives branch migration. In the full resolvosome a probable DNA-RuvA(4)-RuvB(12)-RuvC(2) complex forms which resolves the HJ.

It localises to the cytoplasm. Its function is as follows. The RuvA-RuvB-RuvC complex processes Holliday junction (HJ) DNA during genetic recombination and DNA repair, while the RuvA-RuvB complex plays an important role in the rescue of blocked DNA replication forks via replication fork reversal (RFR). RuvA specifically binds to HJ cruciform DNA, conferring on it an open structure. The RuvB hexamer acts as an ATP-dependent pump, pulling dsDNA into and through the RuvAB complex. HJ branch migration allows RuvC to scan DNA until it finds its consensus sequence, where it cleaves and resolves the cruciform DNA. This Bartonella bacilliformis (strain ATCC 35685 / KC583 / Herrer 020/F12,63) protein is Holliday junction branch migration complex subunit RuvA.